The primary structure comprises 767 residues: Phosphoribosylformylglycinamidine synthase subunit PurL (767 aa).

The active site involves His65. ATP contacts are provided by Tyr68 and Lys112. Mg(2+) is bound at residue Glu114. Substrate is bound by residues 115 to 118 and Arg137; that span reads SHNH. His116 acts as the Proton acceptor in catalysis. Residue Asp138 participates in Mg(2+) binding. Substrate is bound at residue Gln262. Mg(2+) is bound at residue Asp290. Substrate is bound at residue 334-336; it reads ESQ. ATP contacts are provided by Asp522 and Gly559. Residue Asn560 coordinates Mg(2+). Ser562 contacts substrate.

It belongs to the FGAMS family. As to quaternary structure, monomer. Part of the FGAM synthase complex composed of 1 PurL, 1 PurQ and 2 PurS subunits.

Its subcellular location is the cytoplasm. The enzyme catalyses N(2)-formyl-N(1)-(5-phospho-beta-D-ribosyl)glycinamide + L-glutamine + ATP + H2O = 2-formamido-N(1)-(5-O-phospho-beta-D-ribosyl)acetamidine + L-glutamate + ADP + phosphate + H(+). It participates in purine metabolism; IMP biosynthesis via de novo pathway; 5-amino-1-(5-phospho-D-ribosyl)imidazole from N(2)-formyl-N(1)-(5-phospho-D-ribosyl)glycinamide: step 1/2. In terms of biological role, part of the phosphoribosylformylglycinamidine synthase complex involved in the purines biosynthetic pathway. Catalyzes the ATP-dependent conversion of formylglycinamide ribonucleotide (FGAR) and glutamine to yield formylglycinamidine ribonucleotide (FGAM) and glutamate. The FGAM synthase complex is composed of three subunits. PurQ produces an ammonia molecule by converting glutamine to glutamate. PurL transfers the ammonia molecule to FGAR to form FGAM in an ATP-dependent manner. PurS interacts with PurQ and PurL and is thought to assist in the transfer of the ammonia molecule from PurQ to PurL. The chain is Phosphoribosylformylglycinamidine synthase subunit PurL from Renibacterium salmoninarum (strain ATCC 33209 / DSM 20767 / JCM 11484 / NBRC 15589 / NCIMB 2235).